A 785-amino-acid polypeptide reads, in one-letter code: Probably inactive leucine-rich repeat receptor-like protein kinase At5g58150 (785 aa).

A signal peptide spans M1–S21. Over L22–K436 the chain is Extracellular. LRR repeat units follow at residues S64–K88, M89–L112, L114–F136, S138–L160, V161–C184, S186–A208, P210–E232, T236–N258, W259–A283, H284–K306, L307–R330, L331–N355, E357–K377, and A379–R405. N-linked (GlcNAc...) asparagine glycosylation occurs at N119. N-linked (GlcNAc...) asparagine glycans are attached at residues N162, N198, N216, and N258. 3 N-linked (GlcNAc...) asparagine glycosylation sites follow: N314, N319, and N343. Residues N385, N390, and N397 are each glycosylated (N-linked (GlcNAc...) asparagine). A helical membrane pass occupies residues I437–V457. At A458 to Y785 the chain is on the cytoplasmic side. A phosphothreonine mark is found at T510 and T518. The Protein kinase domain occupies F521 to Y785. Residues L527–T535 and K549 each bind ATP. Phosphotyrosine is present on residues Y594 and Y683.

It belongs to the protein kinase superfamily. Ser/Thr protein kinase family.

Its subcellular location is the cell membrane. This Arabidopsis thaliana (Mouse-ear cress) protein is Probably inactive leucine-rich repeat receptor-like protein kinase At5g58150.